The chain runs to 378 residues: Glutamate 5-kinase (378 aa).

Lys14 contributes to the ATP binding site. The substrate site is built by Ser54, Asp141, and Asn153. 173–174 (SD) contributes to the ATP binding site. The PUA domain occupies 279–356 (AGRLTVDAGA…DEISEILGYD (78 aa)).

This sequence belongs to the glutamate 5-kinase family.

Its subcellular location is the cytoplasm. It carries out the reaction L-glutamate + ATP = L-glutamyl 5-phosphate + ADP. It functions in the pathway amino-acid biosynthesis; L-proline biosynthesis; L-glutamate 5-semialdehyde from L-glutamate: step 1/2. Its function is as follows. Catalyzes the transfer of a phosphate group to glutamate to form L-glutamate 5-phosphate. This chain is Glutamate 5-kinase, found in Brucella anthropi (strain ATCC 49188 / DSM 6882 / CCUG 24695 / JCM 21032 / LMG 3331 / NBRC 15819 / NCTC 12168 / Alc 37) (Ochrobactrum anthropi).